The sequence spans 367 residues: Protein RecA (367 aa).

Residue 73–80 (GPESSGKT) participates in ATP binding. Residues 345–367 (DEPVAKKASAKESKEAKELKEVE) are disordered.

Belongs to the RecA family.

Its subcellular location is the cytoplasm. In terms of biological role, can catalyze the hydrolysis of ATP in the presence of single-stranded DNA, the ATP-dependent uptake of single-stranded DNA by duplex DNA, and the ATP-dependent hybridization of homologous single-stranded DNAs. It interacts with LexA causing its activation and leading to its autocatalytic cleavage. This chain is Protein RecA, found in Janthinobacterium sp. (strain Marseille) (Minibacterium massiliensis).